The chain runs to 83 residues: High-potential iron-sulfur protein (83 aa).

[4Fe-4S] cluster-binding residues include cysteine 43, cysteine 46, cysteine 61, and cysteine 75.

The protein belongs to the high-potential iron-sulfur protein (HiPIP) family. As to quaternary structure, homodimer.

Its subcellular location is the periplasm. Functionally, specific class of high-redox-potential 4Fe-4S ferredoxins. Functions in anaerobic electron transport in most purple and in some other photosynthetic bacteria and in at least one genus (Paracoccus) of halophilic, denitrifying bacteria. The sequence is that of High-potential iron-sulfur protein from Isochromatium buderi (Chromatium buderi).